A 1317-amino-acid chain; its full sequence is DNA-directed RNA polymerase subunit beta' (1317 aa).

Cysteine 60, cysteine 62, cysteine 75, and cysteine 78 together coordinate Zn(2+). The tract at residues 183–209 (ELEDEGAKSDVKRKVRDGGEREMRQLR) is disordered. The Mg(2+) site is built by aspartate 535, aspartate 537, and aspartate 539. Residues cysteine 890, cysteine 967, cysteine 974, and cysteine 977 each coordinate Zn(2+).

This sequence belongs to the RNA polymerase beta' chain family. The RNAP catalytic core consists of 2 alpha, 1 beta, 1 beta' and 1 omega subunit. When a sigma factor is associated with the core the holoenzyme is formed, which can initiate transcription. The cofactor is Mg(2+). Requires Zn(2+) as cofactor.

It catalyses the reaction RNA(n) + a ribonucleoside 5'-triphosphate = RNA(n+1) + diphosphate. Functionally, DNA-dependent RNA polymerase catalyzes the transcription of DNA into RNA using the four ribonucleoside triphosphates as substrates. The protein is DNA-directed RNA polymerase subunit beta' of Mycolicibacterium vanbaalenii (strain DSM 7251 / JCM 13017 / BCRC 16820 / KCTC 9966 / NRRL B-24157 / PYR-1) (Mycobacterium vanbaalenii).